Reading from the N-terminus, the 201-residue chain is Recombination protein RecR (201 aa).

The C4-type zinc-finger motif lies at cysteine 57–cysteine 72. Residues glycine 81–proline 176 enclose the Toprim domain.

This sequence belongs to the RecR family.

Functionally, may play a role in DNA repair. It seems to be involved in an RecBC-independent recombinational process of DNA repair. It may act with RecF and RecO. The polypeptide is Recombination protein RecR (Idiomarina loihiensis (strain ATCC BAA-735 / DSM 15497 / L2-TR)).